The sequence spans 278 residues: Ribosomal RNA small subunit methyltransferase A (278 aa).

Positions 28, 30, 55, 77, 103, and 122 each coordinate S-adenosyl-L-methionine.

It belongs to the class I-like SAM-binding methyltransferase superfamily. rRNA adenine N(6)-methyltransferase family. RsmA subfamily.

It is found in the cytoplasm. It carries out the reaction adenosine(1518)/adenosine(1519) in 16S rRNA + 4 S-adenosyl-L-methionine = N(6)-dimethyladenosine(1518)/N(6)-dimethyladenosine(1519) in 16S rRNA + 4 S-adenosyl-L-homocysteine + 4 H(+). Its function is as follows. Specifically dimethylates two adjacent adenosines (A1518 and A1519) in the loop of a conserved hairpin near the 3'-end of 16S rRNA in the 30S particle. May play a critical role in biogenesis of 30S subunits. This Cereibacter sphaeroides (strain ATCC 17025 / ATH 2.4.3) (Rhodobacter sphaeroides) protein is Ribosomal RNA small subunit methyltransferase A.